A 413-amino-acid chain; its full sequence is PCI domain-containing protein 2 homolog (413 aa).

Residues 222–403 (VAYNYFLGRK…QKLVISKMNA (182 aa)) form the PCI domain.

It belongs to the CSN12 family.

This Caenorhabditis elegans protein is PCI domain-containing protein 2 homolog.